We begin with the raw amino-acid sequence, 151 residues long: Endoribonuclease YbeY (151 aa).

Zn(2+)-binding residues include H108, H112, and D118.

This sequence belongs to the endoribonuclease YbeY family. The cofactor is Zn(2+).

Its subcellular location is the cytoplasm. Its function is as follows. Single strand-specific metallo-endoribonuclease involved in late-stage 70S ribosome quality control and in maturation of the 3' terminus of the 16S rRNA. The polypeptide is Endoribonuclease YbeY (Porphyromonas gingivalis (strain ATCC BAA-308 / W83)).